The following is a 397-amino-acid chain: Elongation factor Tu (397 aa).

One can recognise a tr-type G domain in the interval 10–206; it reads KPHVNIGTIG…EVDAYIPTPE (197 aa). The interval 19–26 is G1; it reads GHVDHGKT. 19 to 26 is a binding site for GTP; sequence GHVDHGKT. A Mg(2+)-binding site is contributed by T26. A G2 region spans residues 60–64; it reads GITIN. The G3 stretch occupies residues 81–84; it reads DCPG. GTP is bound by residues 81 to 85 and 136 to 139; these read DCPGH and NKAD. A G4 region spans residues 136-139; that stretch reads NKAD. The G5 stretch occupies residues 174–176; the sequence is SAL.

The protein belongs to the TRAFAC class translation factor GTPase superfamily. Classic translation factor GTPase family. EF-Tu/EF-1A subfamily. Monomer.

The protein localises to the cytoplasm. The enzyme catalyses GTP + H2O = GDP + phosphate + H(+). GTP hydrolase that promotes the GTP-dependent binding of aminoacyl-tRNA to the A-site of ribosomes during protein biosynthesis. The protein is Elongation factor Tu of Clostridium acetobutylicum (strain ATCC 824 / DSM 792 / JCM 1419 / IAM 19013 / LMG 5710 / NBRC 13948 / NRRL B-527 / VKM B-1787 / 2291 / W).